The following is a 194-amino-acid chain: Homing endonuclease I-DmoI (194 aa).

The 134-residue stretch at 14-147 (LLGLIIGDGG…VSRWLNNLGV (134 aa)) folds into the DOD-type homing endonuclease domain. Catalysis depends on residues aspartate 21 and glutamate 117.

Requires a divalent metal cation as cofactor.

Endonuclease involved in intron homing. Recognizes DNA in the 23S rRNA gene intron (minimally 5'-CCGGGTAAGTTCCGG-3'), cutting after A-8 on the top and C-11 on the bottom strand. Has a slow turnover rate, cuts the coding strand with a slight preference over the non-coding strand. This Desulfurococcus mucosus (Desulfurococcus mobilis) protein is Homing endonuclease I-DmoI.